A 504-amino-acid polypeptide reads, in one-letter code: L-carnitine/gamma-butyrobetaine antiporter (504 aa).

Helical transmembrane passes span 10 to 30, 51 to 71, 92 to 112, 143 to 163, 195 to 215, 231 to 251, 263 to 283, 316 to 336, 347 to 367, 398 to 418, 446 to 466, and 475 to 495; these read IEPKVFFPPLIIVGILCWLTV, WGWAFEWYMVVMLFGWFWLVF, IFMMFASCTSAAVLFWGSIEI, GPLPWATYSFLSVAFAYFFFV, FYLVALIFAMGTSLGLATPLV, LDAIIITCWIILNAICVACGL, SYLSFLMLGWVFIVSGASFIM, WTVFYWAWWVIYAIQMSIFLA, LCFGMVLGLTASTWILWTVLG, WAALPLSTATMWGFFILCFIA, LLVRIGWSILVGIIGIVLLAL, and AIIAGGCPLFFVNIMVTLSFI.

It belongs to the BCCT transporter (TC 2.A.15) family. CaiT subfamily. Homotrimer.

The protein localises to the cell inner membrane. The catalysed reaction is 4-(trimethylamino)butanoate(in) + (R)-carnitine(out) = 4-(trimethylamino)butanoate(out) + (R)-carnitine(in). It participates in amine and polyamine metabolism; carnitine metabolism. Functionally, catalyzes the exchange of L-carnitine for gamma-butyrobetaine. The sequence is that of L-carnitine/gamma-butyrobetaine antiporter from Escherichia coli (strain K12 / MC4100 / BW2952).